We begin with the raw amino-acid sequence, 423 residues long: COP9 signalosome complex subunit 3 (423 aa).

Position 2 is an N-acetylalanine (A2). The PCI domain occupies 197–365; sequence NFERALYFYE…GMVSFHDNPE (169 aa). The interval 402–423 is disordered; the sequence is QFVQKSMGSQEDDSGNKPSSYS. Phosphoserine is present on residues S407, S410, and S423.

This sequence belongs to the CSN3 family. As to quaternary structure, component of the CSN complex, composed of COPS1/GPS1, COPS2, COPS3, COPS4, COPS5, COPS6, COPS7 (COPS7A or COPS7B), COPS8 and COPS9 isoform 1. In the complex, it probably interacts directly with COPS1, COPS4, COPS8 and COPS9 isoform 1. Interacts with CK2 and PKD. Interacts with the translation initiation factor EIF3S6 and IKBKG. Interacts with ERCC6. Widely expressed. Expressed at high level in heart and skeletal muscle.

The protein localises to the cytoplasm. The protein resides in the nucleus. In terms of biological role, component of the COP9 signalosome complex (CSN), a complex involved in various cellular and developmental processes. The CSN complex is an essential regulator of the ubiquitin (Ubl) conjugation pathway by mediating the deneddylation of the cullin subunits of SCF-type E3 ligase complexes, leading to decrease the Ubl ligase activity of SCF-type complexes such as SCF, CSA or DDB2. The complex is also involved in phosphorylation of p53/TP53, c-jun/JUN, IkappaBalpha/NFKBIA, ITPK1 and IRF8/ICSBP, possibly via its association with CK2 and PKD kinases. CSN-dependent phosphorylation of TP53 and JUN promotes and protects degradation by the Ubl system, respectively. The sequence is that of COP9 signalosome complex subunit 3 (COPS3) from Homo sapiens (Human).